The sequence spans 114 residues: MAAGRVWGRLGAVSGALAVTAGAYGAHGFRRSDRDEYLKELFETGNRYHFLHSLALLAVPHCRRPLLAGSLLTSGIVLFSGTFYYQALSGDPTLTKAAPYGGTLLILGWAAMAL.

The signal sequence occupies residues 1–25 (MAAGRVWGRLGAVSGALAVTAGAYG). Residues 26–64 (AHGFRRSDRDEYLKELFETGNRYHFLHSLALLAVPHCRR) lie on the Extracellular side of the membrane. Residues 65–85 (PLLAGSLLTSGIVLFSGTFYY) form a helical membrane-spanning segment. The Cytoplasmic segment spans residues 86–93 (QALSGDPT). The helical transmembrane segment at 94 to 114 (LTKAAPYGGTLLILGWAAMAL) threads the bilayer.

Belongs to the TMEM256 family.

It is found in the cell membrane. The sequence is that of Transmembrane protein 256 homolog from Bufo gargarizans (Asian toad).